The chain runs to 324 residues: Uric acid degradation bifunctional protein TTL (324 aa).

N-acetylalanine is present on A2. Residues 2 to 29 (AMEIGEDEWKVCCGSSEFAKQMSTSGPL) are required for BRI1-binding. Residues 2–161 (AMEIGEDEWK…LRMAKLFSDK (160 aa)) form an OHCU decarboxylase region. H58 acts as the Proton donor; for OHCU decarboxylase activity in catalysis. Residues H58, P59, E80, F111, I113, and A115 each contribute to the (S)-allantoin site. The interval 178-324 (KPQDRLRIIG…PFSFSTYRGS (147 aa)) is HIU hydrolase. The short motif at 182 to 190 (RLRIIGGHL) is the Internal peroxisomal targeting signal (PTS2) element.

This sequence in the N-terminal section; belongs to the OHCU decarboxylase family. In the C-terminal section; belongs to the transthyretin family. 5-hydroxyisourate hydrolase subfamily. In terms of assembly, homodimer. Forms tetramers. Interacts with BRI1 in a kinase-dependent manner. Interacts with B1L. Phosphorylated by BRI1 in vitro. Expressed ubiquitously with highest levels in flowers buds and elongating inflorescences. In terms of tissue distribution, mainly expressed in stems and leaves, and, to a lower extent, in flowers, flower buds and seedlings. As to expression, strongly expressed in flower buds and leaves, to a lower extent in stems, and at low levels in seedlings and flowers.

The protein localises to the cell membrane. It is found in the peroxisome. Its subcellular location is the cytoplasm. It localises to the cytosol. It carries out the reaction 5-hydroxyisourate + H2O = 5-hydroxy-2-oxo-4-ureido-2,5-dihydro-1H-imidazole-5-carboxylate + H(+). The enzyme catalyses 5-hydroxy-2-oxo-4-ureido-2,5-dihydro-1H-imidazole-5-carboxylate + H(+) = (S)-allantoin + CO2. It functions in the pathway purine metabolism; urate degradation; (S)-allantoin from urate: step 2/3. Its pathway is purine metabolism; urate degradation; (S)-allantoin from urate: step 3/3. Functionally, involved in the last two steps of the degradation of uric acid, i.e. the hydrolysis of 5-hydroxyisourate (HIU) to 2-oxo-4-hydroxy-4-carboxy-5-ureidoimidazoline (OHCU) and its stereoselective decarboxylation to (S)-allantoin, a major ureide compound. Might function as a negative regulator to modulate brassinosteroid-mediated plant growth. Together with B1L, prevents plant growth and development, but by opposition to B1L, negatively regulates cold tolerance, probably in a brassinosteroid (BR) and allantoin-dependent manner. The chain is Uric acid degradation bifunctional protein TTL from Arabidopsis thaliana (Mouse-ear cress).